A 1270-amino-acid chain; its full sequence is DNA-directed RNA polymerase subunit beta (1270 aa).

The protein belongs to the RNA polymerase beta chain family. In terms of assembly, the RNAP catalytic core consists of 2 alpha, 1 beta, 1 beta' and 1 omega subunit. When a sigma factor is associated with the core the holoenzyme is formed, which can initiate transcription.

The catalysed reaction is RNA(n) + a ribonucleoside 5'-triphosphate = RNA(n+1) + diphosphate. In terms of biological role, DNA-dependent RNA polymerase catalyzes the transcription of DNA into RNA using the four ribonucleoside triphosphates as substrates. The polypeptide is DNA-directed RNA polymerase subunit beta (Bacteroides fragilis (strain ATCC 25285 / DSM 2151 / CCUG 4856 / JCM 11019 / LMG 10263 / NCTC 9343 / Onslow / VPI 2553 / EN-2)).